We begin with the raw amino-acid sequence, 1030 residues long: ATPase MORC2A (1030 aa).

An N-acetylalanine modification is found at A2. Residues N39, 87–89 (SAK), and 99–105 (QYGNGLK) each bind ATP. N39 provides a ligand contact to Mg(2+). Residues 285 to 362 (KTRAEQEVKK…KDAKQRALKE (78 aa)) adopt a coiled-coil conformation. ATP is bound at residue K427. Residues 490–544 (AMEIPTTIQCDLCLKWRTLPFQLSSVETDYPDTWVCSMNPDPEQDRCEASEQKQK) form a CW-type zinc finger. Zn(2+) contacts are provided by C499, C502, C525, and C536. Residues 530 to 791 (DPEQDRCEAS…HPAELRKAQK (262 aa)) are disordered. Composition is skewed to basic and acidic residues over residues 532–543 (EQDRCEASEQKQ) and 550–577 (LKKD…KLEA). The stretch at 555–583 (KTQEEKQKQLTEKIRQQQEKLEALQKTTP) forms a coiled coil. A Phosphothreonine modification is found at T582. The residue at position 614 (S614) is a Phosphoserine. Residues 629–646 (PSIQTPRPSTQLRKTSVI) are compositionally biased toward polar residues. Residues K650 and K702 each participate in a glycyl lysine isopeptide (Lys-Gly) (interchain with G-Cter in SUMO2) cross-link. Low complexity predominate over residues 693-702 (PPLSLIPSSK). S703 is subject to Phosphoserine. A Glycyl lysine isopeptide (Lys-Gly) (interchain with G-Cter in SUMO2) cross-link involves residue K714. S728 carries the phosphoserine modification. Phosphothreonine is present on T731. Phosphoserine is present on residues S737 and S741. Positions 738-775 (LAVSDEEEAEEEAEKRRERCKRGKLAVKEEKKEANELS) form a coiled coil. A compositionally biased stretch (basic and acidic residues) spans 763 to 772 (AVKEEKKEAN). Residue K765 forms a Glycyl lysine isopeptide (Lys-Gly) (interchain with G-Cter in SUMO2) linkage. Residues S775 and S777 each carry the phosphoserine modification. Over residues 779–791 (GEDHPAELRKAQK) the composition is skewed to basic and acidic residues. A Glycyl lysine isopeptide (Lys-Gly) (interchain with G-Cter in SUMO2) cross-link involves residue K817. T834 is subject to Phosphothreonine. Over residues 837-849 (DRWVEKGSEDVRL) the composition is skewed to basic and acidic residues. Disordered regions lie at residues 837 to 874 (DRWV…EAMV) and 882 to 901 (PEPS…ATSP). Residues S854 and S859 each carry the phosphoserine modification. A compositionally biased stretch (polar residues) spans 856 to 865 (EHQSPDTQQE). A Glycyl lysine isopeptide (Lys-Gly) (interchain with G-Cter in SUMO2) cross-link involves residue K930. Residues 966–1011 (RADSRAKASEESLRTSEKKLRETEEKLQKLRTNIVALLQKVQEDID) adopt a coiled-coil conformation.

In terms of assembly, homodimerizes upon ATP-binding and dissociate upon ATP hydrolysis; homodimerization is required for gene silencing. Binds histone H3 independently of the methylation status at 'Lys-9'. Interacts with HDAC4. Interacts with FAM208A/TASOR and MPHOSPH8; the interactions associate MORC2 with the HUSH complex which recruits MORC2 to heterochromatic loci. Interacts with Morc2b. Phosphorylated by PAK1 at Ser-737 upon DNA damage. Phosphorylation is required for ATPase activity and recruitment to damaged chromatin. Expressed in the axons and Schwann cells of peripheral nerves. Expressed in testes.

The protein localises to the nucleus. The protein resides in the cytoplasm. It localises to the cytosol. It is found in the chromosome. Its subcellular location is the nucleus matrix. The enzyme catalyses ATP + H2O = ADP + phosphate + H(+). ATPase activity is dependent of phosphorylation by PAK1 and presence of DNA. Essential for epigenetic silencing by the HUSH complex. Recruited by HUSH to target site in heterochromatin, the ATPase activity and homodimerization are critical for HUSH-mediated silencing. Represses germ cell-related genes and L1 retrotransposons in collaboration with SETDB1 and the HUSH complex, the silencing is dependent of repressive epigenetic modifications, such as H3K9me3 mark. Silencing events often occur within introns of transcriptionally active genes, and lead to the down-regulation of host gene expression. During DNA damage response, regulates chromatin remodeling through ATP hydrolysis. During DNA damage response, may regulate chromatin remodeling through ATP hydrolysis. This chain is ATPase MORC2A, found in Mus musculus (Mouse).